Consider the following 213-residue polypeptide: Probable GTP-binding protein EngB (213 aa).

An EngB-type G domain is found at 30 to 204 (SVQSIAFMGR…REFILETLGI (175 aa)). Residues 38–45 (GRSNSGKS), 65–69 (GKTKL), 83–86 (DLPG), 150–153 (TKID), and 183–185 (ISA) each bind GTP. Positions 45 and 67 each coordinate Mg(2+).

Belongs to the TRAFAC class TrmE-Era-EngA-EngB-Septin-like GTPase superfamily. EngB GTPase family. Requires Mg(2+) as cofactor.

Functionally, necessary for normal cell division and for the maintenance of normal septation. In Leptospira biflexa serovar Patoc (strain Patoc 1 / Ames), this protein is Probable GTP-binding protein EngB.